A 394-amino-acid polypeptide reads, in one-letter code: 1-deoxy-D-xylulose 5-phosphate reductoisomerase (394 aa).

Residues Thr-10, Gly-11, Ser-12, Ile-13, Gly-38, Arg-39, Asn-40, and Asn-123 each coordinate NADPH. Lys-124 contacts 1-deoxy-D-xylulose 5-phosphate. An NADPH-binding site is contributed by Glu-125. Asp-149 serves as a coordination point for Mn(2+). Residues Ser-150, Glu-151, Ser-175, and His-198 each coordinate 1-deoxy-D-xylulose 5-phosphate. Glu-151 is a Mn(2+) binding site. Position 204 (Gly-204) interacts with NADPH. Ser-211, Asn-216, Lys-217, and Glu-220 together coordinate 1-deoxy-D-xylulose 5-phosphate. Glu-220 lines the Mn(2+) pocket.

This sequence belongs to the DXR family. It depends on Mg(2+) as a cofactor. Mn(2+) serves as cofactor.

The catalysed reaction is 2-C-methyl-D-erythritol 4-phosphate + NADP(+) = 1-deoxy-D-xylulose 5-phosphate + NADPH + H(+). Its pathway is isoprenoid biosynthesis; isopentenyl diphosphate biosynthesis via DXP pathway; isopentenyl diphosphate from 1-deoxy-D-xylulose 5-phosphate: step 1/6. In terms of biological role, catalyzes the NADPH-dependent rearrangement and reduction of 1-deoxy-D-xylulose-5-phosphate (DXP) to 2-C-methyl-D-erythritol 4-phosphate (MEP). In Cereibacter sphaeroides (strain KD131 / KCTC 12085) (Rhodobacter sphaeroides), this protein is 1-deoxy-D-xylulose 5-phosphate reductoisomerase.